A 106-amino-acid polypeptide reads, in one-letter code: Glycine/glutamate-rich protein sgp1 (106 aa).

A signal peptide spans 1–20 (MKYSLIFILTLACLIASSLA). A disordered region spans residues 20 to 66 (ARPEGEEKPADDAAGDKKEEGAEGDKTAAGGDEGFTGGDGKNAGGAG). Over residues 22-45 (PEGEEKPADDAAGDKKEEGAEGDK) the composition is skewed to basic and acidic residues. The segment covering 50–66 (GDEGFTGGDGKNAGGAG) has biased composition (gly residues).

The protein localises to the secreted. The protein is Glycine/glutamate-rich protein sgp1 (sgp1) of Glossina morsitans morsitans (Savannah tsetse fly).